The primary structure comprises 248 residues: 3-deoxy-manno-octulosonate cytidylyltransferase (248 aa).

The protein belongs to the KdsB family.

The protein resides in the cytoplasm. The enzyme catalyses 3-deoxy-alpha-D-manno-oct-2-ulosonate + CTP = CMP-3-deoxy-beta-D-manno-octulosonate + diphosphate. It participates in nucleotide-sugar biosynthesis; CMP-3-deoxy-D-manno-octulosonate biosynthesis; CMP-3-deoxy-D-manno-octulosonate from 3-deoxy-D-manno-octulosonate and CTP: step 1/1. Its pathway is bacterial outer membrane biogenesis; lipopolysaccharide biosynthesis. Activates KDO (a required 8-carbon sugar) for incorporation into bacterial lipopolysaccharide in Gram-negative bacteria. In Christiangramia forsetii (strain DSM 17595 / CGMCC 1.15422 / KT0803) (Gramella forsetii), this protein is 3-deoxy-manno-octulosonate cytidylyltransferase.